Reading from the N-terminus, the 252-residue chain is Adaptation to cold protein B (252 aa).

As to quaternary structure, interacts with AtcC, but not with AtcA and AtcJ. Interacts with the RNA polymerase subunits RpoB and RpoC.

Its function is as follows. Involved in cold adaptation. Directly interacts with the RNA polymerase and decreases its activity. May direct the DnaK chaperone to the RNA polymerase to sustain life at low temperatures. Overproduction prevents bacterial growth due to RNA polymerase inhibition. This chain is Adaptation to cold protein B, found in Shewanella oneidensis (strain ATCC 700550 / JCM 31522 / CIP 106686 / LMG 19005 / NCIMB 14063 / MR-1).